We begin with the raw amino-acid sequence, 95 residues long: MELVLVFLCSLLAPTVLASAAEKEKEMDPFHYDYQTLRIGGLVFAVVLFSVGILLILSRRCKCSFNQKPRAPGDEEAQVENLITANATEPQKAEN.

The first 18 residues, 1-18 (MELVLVFLCSLLAPTVLA), serve as a signal peptide directing secretion. The Extracellular portion of the chain corresponds to 19-35 (SAAEKEKEMDPFHYDYQ). The chain crosses the membrane as a helical span at residues 36–58 (TLRIGGLVFAVVLFSVGILLILS). Topologically, residues 59–95 (RRCKCSFNQKPRAPGDEEAQVENLITANATEPQKAEN) are cytoplasmic.

This sequence belongs to the FXYD family. Regulatory subunit of the sodium/potassium-transporting ATPase which is composed of a catalytic alpha subunit, a non-catalytic beta subunit and an additional regulatory subunit. The regulatory subunit, a member of the FXYD protein family, modulates the enzymatic activity in a tissue- and isoform-specific way by changing affinities of the Na+/K+-ATPase toward Na(+), K(+) or ATP.

The protein localises to the cell membrane. Its function is as follows. Associates with and regulates the activity of the sodium/potassium-transporting ATPase (NKA) which catalyzes the hydrolysis of ATP coupled with the exchange of Na(+) and K(+) ions across the plasma membrane. Reduces the apparent affinity for intracellular Na(+) with no change in the apparent affinity for extracellular K(+). In addition to modulating NKA kinetics, may also function as a regulator of NKA localization to the plasma membrane. The chain is FXYD domain-containing ion transport regulator 6 (FXYD6) from Pongo abelii (Sumatran orangutan).